The sequence spans 506 residues: uncharacterized protein (506 aa).

This sequence to group II intron maturases.

It is found in the plastid. The protein resides in the chloroplast. This is an uncharacterized protein from Euglena gracilis.